The following is a 432-amino-acid chain: Trigger factor (432 aa).

In terms of domain architecture, PPIase FKBP-type spans 161 to 246 (EDRVTIDFTG…LKKVEERGLP (86 aa)).

Belongs to the FKBP-type PPIase family. Tig subfamily.

It localises to the cytoplasm. It catalyses the reaction [protein]-peptidylproline (omega=180) = [protein]-peptidylproline (omega=0). Its function is as follows. Involved in protein export. Acts as a chaperone by maintaining the newly synthesized protein in an open conformation. Functions as a peptidyl-prolyl cis-trans isomerase. The polypeptide is Trigger factor (Salmonella choleraesuis (strain SC-B67)).